The chain runs to 302 residues: Gap junction delta-2 protein (302 aa).

The Cytoplasmic portion of the chain corresponds to 1–19 (MGEWTILERLLEAAVQQHS). Residues 20–42 (TMIGRILLTVVVIFRILVVAIVG) form a helical membrane-spanning segment. Topologically, residues 43-75 (ETVYDDEQTMFVCNTLQPGCNQACYDKAFPISH) are extracellular. A helical transmembrane segment spans residues 76 to 98 (IRYWVFQIIMVCTPSLCFITYSV). Topologically, residues 99–177 (HQSSKQRERQ…KIRRQEGISR (79 aa)) are cytoplasmic. A helical transmembrane segment spans residues 178-200 (FYIIQVVFRNALEIGFLMGQYFL). Over 201–232 (YGFKVPSMYECNRYPCVKMVECYVSRPTEKTV) the chain is Extracellular. Residues 233–255 (FLVFMFAVSGLCVILNLAELNHL) traverse the membrane as a helical segment. At 256–302 (GWRKIKTAVRGAQERRKSIYEIRNKDSPHRIGVPNFGRTQSSDSAYV) the chain is on the cytoplasmic side.

Belongs to the connexin family. Delta-type subfamily. A connexon is composed of a hexamer of connexins. As to expression, retinal specific.

Its subcellular location is the cell membrane. The protein localises to the cell junction. The protein resides in the gap junction. Functionally, one gap junction consists of a cluster of closely packed pairs of transmembrane channels, the connexons, through which materials of low MW diffuse from one cell to a neighboring cell. This Leucoraja erinaceus (Little skate) protein is Gap junction delta-2 protein.